Here is a 365-residue protein sequence, read N- to C-terminus: Phospho-N-acetylmuramoyl-pentapeptide-transferase (365 aa).

Helical transmembrane passes span 2–22, 51–71, 80–100, 118–138, 167–187, 196–216, 234–254, 256–276, 277–297, and 340–360; these read ISLI…TPLL, TLGG…SALY, PSWS…LGFI, GKFI…LILP, VAIV…TNAI, LAAG…FWEF, PLDL…FLWY, SNPA…GLFA, AMSI…LFVI, and FWMI…GDWV.

It belongs to the glycosyltransferase 4 family. MraY subfamily. Requires Mg(2+) as cofactor.

It is found in the cell membrane. The catalysed reaction is UDP-N-acetyl-alpha-D-muramoyl-L-alanyl-gamma-D-glutamyl-meso-2,6-diaminopimeloyl-D-alanyl-D-alanine + di-trans,octa-cis-undecaprenyl phosphate = di-trans,octa-cis-undecaprenyl diphospho-N-acetyl-alpha-D-muramoyl-L-alanyl-D-glutamyl-meso-2,6-diaminopimeloyl-D-alanyl-D-alanine + UMP. It participates in cell wall biogenesis; peptidoglycan biosynthesis. Functionally, catalyzes the initial step of the lipid cycle reactions in the biosynthesis of the cell wall peptidoglycan: transfers peptidoglycan precursor phospho-MurNAc-pentapeptide from UDP-MurNAc-pentapeptide onto the lipid carrier undecaprenyl phosphate, yielding undecaprenyl-pyrophosphoryl-MurNAc-pentapeptide, known as lipid I. The sequence is that of Phospho-N-acetylmuramoyl-pentapeptide-transferase from Bifidobacterium adolescentis (strain ATCC 15703 / DSM 20083 / NCTC 11814 / E194a).